A 180-amino-acid polypeptide reads, in one-letter code: uncharacterized protein (180 aa).

This is an uncharacterized protein from Magallana gigas (Pacific oyster).